Consider the following 475-residue polypeptide: MGMWASLDALWEMPAEKRIFGAVLLFSWTVYLWETFLAQRQRRIYKTTTHVPPELGQIMDSETFEKSRLYQLDKSTFSFWSGLYSETEGTLILLFGGIPYLWRLSGRFCGYAGFGPEYEITQSLVFLLLATLFSALTGLPWSLYNTFVIEEKHGFNQQTLGFFMKDAIKKFVVTQCILLPVSSLLLYIIKIGGDYFFIYAWLFTLVVSLVLVTIYADYIAPLFDKFTPLPEGKLKEEIEVMAKSIDFPLTKVYVVEGSKRSSHSNAYFYGFFKNKRIVLFDTLLEEYSVLNKDIQEDSGMEPRNEEEGNSEEIKAKVKNKKQGCKNEEVLAVLGHELGHWKLGHTVKNIIISQMNSFLCFFLFAVLIGRKELFAAFGFYDSQPTLIGLLIIFQFIFSPYNEVLSFCLTVLSRRFEFQADAFAKKLGKAKDLYSALIKLNKDNLGFPVSDWLFSMWHYSHPPLLERLQALKTMKQH.

The Lumenal segment spans residues 1–18 (MGMWASLDALWEMPAEKR). Residues 19–39 (IFGAVLLFSWTVYLWETFLAQ) form a helical membrane-spanning segment. At 40 to 81 (RQRRIYKTTTHVPPELGQIMDSETFEKSRLYQLDKSTFSFWS) the chain is on the nuclear side. Residues 82–102 (GLYSETEGTLILLFGGIPYLW) form a helical membrane-spanning segment. Topologically, residues 103–123 (RLSGRFCGYAGFGPEYEITQS) are lumenal. The chain crosses the membrane as a helical span at residues 124–144 (LVFLLLATLFSALTGLPWSLY). Over 145–170 (NTFVIEEKHGFNQQTLGFFMKDAIKK) the chain is Nuclear. The helical transmembrane segment at 171–191 (FVVTQCILLPVSSLLLYIIKI) threads the bilayer. Residues 192-195 (GGDY) are Lumenal-facing. A helical membrane pass occupies residues 196-216 (FFIYAWLFTLVVSLVLVTIYA). The Nuclear portion of the chain corresponds to 217 to 347 (DYIAPLFDKF…GHWKLGHTVK (131 aa)). A Zn(2+)-binding site is contributed by histidine 335. Glutamate 336 is an active-site residue. Histidine 339 provides a ligand contact to Zn(2+). A helical transmembrane segment spans residues 348–368 (NIIISQMNSFLCFFLFAVLIG). The Lumenal segment spans residues 369–382 (RKELFAAFGFYDSQ). A helical transmembrane segment spans residues 383 to 405 (PTLIGLLIIFQFIFSPYNEVLSF). The Nuclear segment spans residues 406–475 (CLTVLSRRFE…LQALKTMKQH (70 aa)). Glutamate 415 is a Zn(2+) binding site.

It belongs to the peptidase M48A family. Requires Zn(2+) as cofactor. As to expression, widely expressed. High levels in kidney, prostate, testis and ovary.

The protein localises to the endoplasmic reticulum membrane. It localises to the nucleus inner membrane. It is found in the early endosome membrane. The protein resides in the late endosome membrane. The catalysed reaction is Hydrolyzes the peptide bond -P2-(S-farnesyl or geranylgeranyl)C-P1'-P2'-P3'-COOH where P1' and P2' are amino acids with aliphatic side chains and P3' is any C-terminal residue.. Functionally, transmembrane metalloprotease whose catalytic activity is critical for processing lamin A/LMNA on the inner nuclear membrane and clearing clogged translocons on the endoplasmic reticulum. Proteolytically removes the C-terminal three residues of farnesylated proteins. Also plays an antiviral role independently of its protease activity by restricting enveloped RNA and DNA viruses, including influenza A, Zika, Ebola, Sindbis, vesicular stomatitis, cowpox, and vaccinia. Mechanistically, controls IFITM antiviral pathway to hinder viruses from breaching the endosomal barrier by modulating membrane fluidity. In Homo sapiens (Human), this protein is CAAX prenyl protease 1 homolog.